Reading from the N-terminus, the 285-residue chain is Probable endonuclease 4 (285 aa).

Zn(2+) is bound by residues His-69, His-109, Glu-145, Asp-179, His-182, His-216, Asp-229, His-231, and Glu-261.

The protein belongs to the AP endonuclease 2 family. Requires Zn(2+) as cofactor.

It catalyses the reaction Endonucleolytic cleavage to 5'-phosphooligonucleotide end-products.. Endonuclease IV plays a role in DNA repair. It cleaves phosphodiester bonds at apurinic or apyrimidinic (AP) sites, generating a 3'-hydroxyl group and a 5'-terminal sugar phosphate. The chain is Probable endonuclease 4 from Salmonella typhimurium (strain LT2 / SGSC1412 / ATCC 700720).